The sequence spans 198 residues: Holliday junction branch migration complex subunit RuvA (198 aa).

The segment at 1-63 is domain I; sequence MYDYIKGQLT…EDAHLLFGFH (63 aa). A domain II region spans residues 64-142; that stretch reads TEDEKDVFLK…EAPQETGHTK (79 aa). Positions 143 to 147 are flexible linker; sequence ARSNK. The tract at residues 148–198 is domain III; the sequence is AGNTQLDEAIEALLALGYKAKELKKIRAFFEETSETAEQYIKSALKLLMKG.

It belongs to the RuvA family. Homotetramer. Forms an RuvA(8)-RuvB(12)-Holliday junction (HJ) complex. HJ DNA is sandwiched between 2 RuvA tetramers; dsDNA enters through RuvA and exits via RuvB. An RuvB hexamer assembles on each DNA strand where it exits the tetramer. Each RuvB hexamer is contacted by two RuvA subunits (via domain III) on 2 adjacent RuvB subunits; this complex drives branch migration. In the full resolvosome a probable DNA-RuvA(4)-RuvB(12)-RuvC(2) complex forms which resolves the HJ.

It is found in the cytoplasm. Its function is as follows. The RuvA-RuvB-RuvC complex processes Holliday junction (HJ) DNA during genetic recombination and DNA repair, while the RuvA-RuvB complex plays an important role in the rescue of blocked DNA replication forks via replication fork reversal (RFR). RuvA specifically binds to HJ cruciform DNA, conferring on it an open structure. The RuvB hexamer acts as an ATP-dependent pump, pulling dsDNA into and through the RuvAB complex. HJ branch migration allows RuvC to scan DNA until it finds its consensus sequence, where it cleaves and resolves the cruciform DNA. The chain is Holliday junction branch migration complex subunit RuvA from Streptococcus pyogenes serotype M2 (strain MGAS10270).